Here is a 707-residue protein sequence, read N- to C-terminus: Elongation factor G (707 aa).

The region spanning Glu-8 to Thr-296 is the tr-type G domain. GTP-binding positions include Ala-17–Thr-24, Asp-94–His-98, and Asn-148–Asp-151.

Belongs to the TRAFAC class translation factor GTPase superfamily. Classic translation factor GTPase family. EF-G/EF-2 subfamily.

It localises to the cytoplasm. Its function is as follows. Catalyzes the GTP-dependent ribosomal translocation step during translation elongation. During this step, the ribosome changes from the pre-translocational (PRE) to the post-translocational (POST) state as the newly formed A-site-bound peptidyl-tRNA and P-site-bound deacylated tRNA move to the P and E sites, respectively. Catalyzes the coordinated movement of the two tRNA molecules, the mRNA and conformational changes in the ribosome. The sequence is that of Elongation factor G from Paracoccus denitrificans (strain Pd 1222).